A 175-amino-acid polypeptide reads, in one-letter code: Keratin-associated protein 13-2 (175 aa).

5 tandem repeats follow at residues 46–55 (CQLGSSLYRG), 56–65 (CQEICWEPTS), 66–75 (CQTSYVESSP), 76–85 (CQTSCYRPRT), and 92–101 (CKTTYSGSLG). The 5 X 10 AA approximate repeats stretch occupies residues 46 to 101 (CQLGSSLYRGCQEICWEPTSCQTSYVESSPCQTSCYRPRTSLLCSPCKTTYSGSLG).

The protein belongs to the PMG family. In terms of assembly, interacts with hair keratins.

In terms of biological role, in the hair cortex, hair keratin intermediate filaments are embedded in an interfilamentous matrix, consisting of hair keratin-associated proteins (KRTAP), which are essential for the formation of a rigid and resistant hair shaft through their extensive disulfide bond cross-linking with abundant cysteine residues of hair keratins. The matrix proteins include the high-sulfur and high-glycine-tyrosine keratins. The polypeptide is Keratin-associated protein 13-2 (KRTAP13-2) (Homo sapiens (Human)).